The primary structure comprises 906 residues: Putative disease resistance protein At1g59780 (906 aa).

Positions 20 to 59 (KLLSQEYERFQGVEEQITELRDDLKMLMAFLSDADAKKQT) form a coiled coil. The NB-ARC domain occupies 138–452 (SHAQLERKRE…AEGITYPGNY (315 aa)). 187 to 194 (GLGGLGKT) contacts ATP. LRR repeat units follow at residues 572–597 (LPLL…IGKL), 599–619 (HLKY…SLRN), 620–644 (LKSL…VFKE), and 825–850 (MPLL…RFIS).

Belongs to the disease resistance NB-LRR family.

Functionally, potential disease resistance protein. The polypeptide is Putative disease resistance protein At1g59780 (Arabidopsis thaliana (Mouse-ear cress)).